The following is a 425-amino-acid chain: Glutamyl-tRNA reductase (425 aa).

Residues 49–52, S107, 112–114, and Q118 each bind substrate; these read TCNR and EPQ. The Nucleophile role is filled by C50. NADP(+) is bound at residue 187 to 192; sequence GAGETI.

This sequence belongs to the glutamyl-tRNA reductase family. Homodimer.

The catalysed reaction is (S)-4-amino-5-oxopentanoate + tRNA(Glu) + NADP(+) = L-glutamyl-tRNA(Glu) + NADPH + H(+). Its pathway is porphyrin-containing compound metabolism; protoporphyrin-IX biosynthesis; 5-aminolevulinate from L-glutamyl-tRNA(Glu): step 1/2. Functionally, catalyzes the NADPH-dependent reduction of glutamyl-tRNA(Glu) to glutamate 1-semialdehyde (GSA). This Pseudomonas putida (strain GB-1) protein is Glutamyl-tRNA reductase.